The primary structure comprises 486 residues: Probable glycine dehydrogenase (decarboxylating) subunit 2 (486 aa).

The interval 1–26 (MLIFESSRPGRQARAQAPKPTAATND) is disordered. An N6-(pyridoxal phosphate)lysine modification is found at Lys264.

It belongs to the GcvP family. C-terminal subunit subfamily. As to quaternary structure, the glycine cleavage system is composed of four proteins: P, T, L and H. In this organism, the P 'protein' is a heterodimer of two subunits. Pyridoxal 5'-phosphate is required as a cofactor.

The enzyme catalyses N(6)-[(R)-lipoyl]-L-lysyl-[glycine-cleavage complex H protein] + glycine + H(+) = N(6)-[(R)-S(8)-aminomethyldihydrolipoyl]-L-lysyl-[glycine-cleavage complex H protein] + CO2. Functionally, the glycine cleavage system catalyzes the degradation of glycine. The P protein binds the alpha-amino group of glycine through its pyridoxal phosphate cofactor; CO(2) is released and the remaining methylamine moiety is then transferred to the lipoamide cofactor of the H protein. The polypeptide is Probable glycine dehydrogenase (decarboxylating) subunit 2 (Nitrosococcus oceani (strain ATCC 19707 / BCRC 17464 / JCM 30415 / NCIMB 11848 / C-107)).